The following is a 304-amino-acid chain: ATP synthase gamma chain (304 aa).

Belongs to the ATPase gamma chain family. F-type ATPases have 2 components, CF(1) - the catalytic core - and CF(0) - the membrane proton channel. CF(1) has five subunits: alpha(3), beta(3), gamma(1), delta(1), epsilon(1). CF(0) has three main subunits: a, b and c.

It is found in the cell membrane. Functionally, produces ATP from ADP in the presence of a proton gradient across the membrane. The gamma chain is believed to be important in regulating ATPase activity and the flow of protons through the CF(0) complex. The protein is ATP synthase gamma chain of Thermobifida fusca (strain YX).